A 112-amino-acid polypeptide reads, in one-letter code: uncharacterized protein (112 aa).

This is an uncharacterized protein from Gallus gallus (Chicken).